The chain runs to 411 residues: Argininosuccinate lyase (411 aa).

Belongs to the lyase 1 family. Argininosuccinate lyase subfamily.

Its subcellular location is the cytoplasm. It carries out the reaction 2-(N(omega)-L-arginino)succinate = fumarate + L-arginine. Its pathway is amino-acid biosynthesis; L-arginine biosynthesis; L-arginine from L-ornithine and carbamoyl phosphate: step 3/3. In Legionella pneumophila (strain Paris), this protein is Argininosuccinate lyase.